Consider the following 1312-residue polypeptide: Kinesin-like protein KIF16B (1312 aa).

The Kinesin motor domain maps to 3-358 (SVKVAVRVRP…LRYANRAKNI (356 aa)). Residue 102 to 109 (GQTGSGKS) participates in ATP binding. Residues 366-425 (EDANVKLIRELRAEIARLKTLLAQGNQIALLDSPTALSMEEKLHQNEARVQELTKEWTNK) are a coiled coil. Phosphoserine is present on Ser398. One can recognise an FHA domain in the interval 480–544 (VGREDASTEQ…LNQGAVILLG (65 aa)). Thr577 is subject to Phosphothreonine. Ser582, Ser838, Ser1047, and Ser1145 each carry phosphoserine. Coiled-coil stretches lie at residues 835 to 913 (KLAS…LQNH) and 941 to 1073 (QVEK…KQKI). One can recognise a PX domain in the interval 1177–1291 (DPIKISIPRY…KVGLTLSKHT (115 aa)).

The protein belongs to the TRAFAC class myosin-kinesin ATPase superfamily. Kinesin family. As to quaternary structure, interacts with PTPN21. Interacts with RAB14.

It localises to the cytoplasm. It is found in the cytoskeleton. The protein resides in the early endosome membrane. Its subcellular location is the spindle. Its function is as follows. Plus end-directed microtubule-dependent motor protein involved in endosome transport and receptor recycling and degradation. Regulates the plus end motility of early endosomes and the balance between recycling and degradation of receptors such as EGF receptor (EGFR) and FGF receptor (FGFR). Regulates the Golgi to endosome transport of FGFR-containing vesicles during early development, a key process for developing basement membrane and epiblast and primitive endoderm lineages during early postimplantation development. The protein is Kinesin-like protein KIF16B (Kif16b) of Mus musculus (Mouse).